A 134-amino-acid chain; its full sequence is Large ribosomal subunit protein eL14 (134 aa).

The protein belongs to the eukaryotic ribosomal protein eL14 family. As to quaternary structure, component of the large ribosomal subunit (LSU). Mature yeast ribosomes consist of a small (40S) and a large (60S) subunit. The 40S small subunit contains 1 molecule of ribosomal RNA (18S rRNA) and at least 33 different proteins. The large 60S subunit contains 3 rRNA molecules (25S, 5.8S and 5S rRNA) and at least 46 different proteins.

The protein resides in the cytoplasm. It localises to the nucleus. In terms of biological role, component of the ribosome, a large ribonucleoprotein complex responsible for the synthesis of proteins in the cell. The small ribosomal subunit (SSU) binds messenger RNAs (mRNAs) and translates the encoded message by selecting cognate aminoacyl-transfer RNA (tRNA) molecules. The large subunit (LSU) contains the ribosomal catalytic site termed the peptidyl transferase center (PTC), which catalyzes the formation of peptide bonds, thereby polymerizing the amino acids delivered by tRNAs into a polypeptide chain. The nascent polypeptides leave the ribosome through a tunnel in the LSU and interact with protein factors that function in enzymatic processing, targeting, and the membrane insertion of nascent chains at the exit of the ribosomal tunnel. In Schizosaccharomyces pombe (strain 972 / ATCC 24843) (Fission yeast), this protein is Large ribosomal subunit protein eL14 (rpl14).